The sequence spans 3117 residues: Centrosome-associated protein 350 (3117 aa).

Positions 1–24 (MRSSKSKEVPLPNPRNSQSKDTVQ) are disordered. Positions 14–24 (PRNSQSKDTVQ) are enriched in polar residues. Residues S86, S139, S142, and S218 each carry the phosphoserine modification. Disordered stretches follow at residues 249-275 (PKALRLTDSSPSSTSTSNSQRLDILKR), 436-514 (ILGP…NKQE), 548-625 (TVEL…TEQK), and 671-722 (LEEP…PPQP). The span at 255-267 (TDSSPSSTSTSNS) shows a compositional bias: low complexity. Positions 469–501 (GRAESDPRLDVLHRHLQRNSERSRSKSRSENNI) are enriched in basic and acidic residues. Phosphoserine is present on residues S473 and S507. Basic residues predominate over residues 563–573 (PRSHSPVKRKP). Composition is skewed to basic and acidic residues over residues 591–625 (YDTDEVRQYIVRQQEERKRKQNEEKKAQKEATEQK) and 694–703 (ESDKENKVQE). Residues 598–645 (QYIVRQQEERKRKQNEEKKAQKEATEQKNKRLQELYRKQKEAFTKVKN) are a coiled coil. S695 carries the phosphoserine modification. Positions 705–718 (PPSASSSSDMSLSE) are enriched in low complexity. Phosphothreonine is present on T878. A Phosphoserine modification is found at S939. A compositionally biased stretch (low complexity) spans 981-992 (SVSEGPLLSEGS). The segment at 981-1002 (SVSEGPLLSEGSLSEEEGDQDG) is disordered. S1061 carries the phosphoserine modification. The interval 1081–1298 (EDKLDRGTST…GFKPNAPLTD (218 aa)) is disordered. A compositionally biased stretch (polar residues) spans 1087–1102 (GTSTSRPLNATATPLS). Residues 1135–1144 (QEDHSNRKSA) show a composition bias toward basic and acidic residues. Composition is skewed to low complexity over residues 1153–1172 (TSQHSSGAQSAASSRSSTSS) and 1251–1267 (QKTPTSPLSPSSQKSLQ). Position 1253 is a phosphothreonine (T1253). 2 positions are modified to phosphoserine: S1256 and S1259. Polar residues predominate over residues 1272–1283 (GTSSERSKSSVM). Positions 1369–1411 (IKAQQQRHERDLALLKLKAEQEALESQRQLEETRNKAAQVHAE) form a coiled coil. 2 disordered regions span residues 1494 to 1674 (TRTE…GGQD) and 1794 to 1854 (KLKS…SRMD). Residues 1503 to 1512 (PSVSLSQSKE) are compositionally biased toward polar residues. 2 stretches are compositionally biased toward low complexity: residues 1522–1535 (YSASYDSYSESSGY) and 1543–1556 (SSGSSRQESPSVPS). Over residues 1558-1571 (KENEKKLNGEKIES) the composition is skewed to basic and acidic residues. S1613 is modified (phosphoserine). Over residues 1631 to 1647 (ESHRRFNMEKRRGHHDD) the composition is skewed to basic and acidic residues. 2 positions are modified to phosphoserine: S1648 and S1653. Residues 1707 to 1800 (KALKEKTKAE…LQEKLKSAGE (94 aa)) adopt a coiled-coil conformation. Basic and acidic residues predominate over residues 1794–1815 (KLKSAGESKLDSHSDDDTKDNK). Position 1818 is a phosphoserine (S1818). Low complexity predominate over residues 1827-1841 (RSPSPISISSSETSS). Residues 1856–1899 (KFLTKREQKLMQRRQHAEELLEWKRRLDAEEAEIRQMEKQALAA) are a coiled coil. A compositionally biased stretch (basic and acidic residues) spans 1903–1925 (ELIKPKTPKKELEDQRTEQKEIA). Disordered stretches follow at residues 1903–2020 (ELIK…QCHL), 2107–2221 (ELSQ…ESGD), 2329–2356 (LKERQSDQDMNHSPNIQSGKDIHEQKNT), and 2407–2432 (KDSQSCRDKPQPMRSSTSGATSFGSN). S1936 is subject to Phosphoserine. Residues 1983–2005 (ELESSTSPSKHSLPKSCTSVSKQ) show a composition bias toward polar residues. Residues 2051 to 2110 (EGRIRALKDELRKRKSVVNQLKKEQKKRQKERLKAQEASLIKQLESYDEFIKKTEAELSQ) are a coiled coil. Polar residues predominate over residues 2111-2129 (DLETSPTAKPQIKTLSSAS). The residue at position 2115 (S2115) is a Phosphoserine. A compositionally biased stretch (basic and acidic residues) spans 2141 to 2170 (HRSETAKNWKSLTESERSRGSLESIAEHVD). Residues 2173–2184 (LSGSERSVSERS) show a composition bias toward polar residues. Residues 2191 to 2201 (RVNEWDSRTED) show a composition bias toward basic and acidic residues. T2204 bears the Phosphothreonine mark. Residue S2206 is modified to Phosphoserine. 2 stretches are compositionally biased toward basic and acidic residues: residues 2329–2338 (LKERQSDQDM) and 2407–2417 (KDSQSCRDKPQ). Over residues 2419–2432 (MRSSTSGATSFGSN) the composition is skewed to polar residues. Residues S2431 and S2460 each carry the phosphoserine modification. Residues 2465–2478 (MKSKERSDVEHEQQ) show a composition bias toward basic and acidic residues. Residues 2465-2485 (MKSKERSDVEHEQQVTESPSL) form a disordered region. In terms of domain architecture, CAP-Gly spans 2517 to 2559 (GETSFAKGFWAGVELDKPEGNNNGTYDGIAYFECKEKHGIFAP). At T2689 the chain carries Phosphothreonine. Residues 2719–2752 (LLDLLTREKNQLEAQLKSSLNEEKKSKQQLEKIS) are a coiled coil. Phosphoserine occurs at positions 2830 and 2839.

In terms of assembly, part of a ternary complex that contains CEP350, CEP43 and MAPRE1. Interacts (via C-terminus) directly with CEP43 (via N-terminus). Interacts with NR1H3, PPARA, PPARD and PPARG. Interacts directly with microtubules. Interacts with the fusion protein CEP43-FGFR1, and by doing so recruits and activates PI3K and PLC-gamma. Interacts with CYLD. Interacts with CFAP157. Interacts with CEP19 (via C-terminus). Interacts with CEP78; promoting CEP78 localization to centrosome and centriole. Phosphorylated during mitosis. Detected in heart, brain, skeletal muscle, testis, placenta, lung, liver, kidney and pancreas.

The protein localises to the cytoplasm. Its subcellular location is the cytoskeleton. It localises to the microtubule organizing center. It is found in the centrosome. The protein resides in the spindle. The protein localises to the nucleus. Its subcellular location is the centriole. It localises to the cilium basal body. In terms of biological role, plays an essential role in centriole growth by stabilizing a procentriolar seed composed of at least, SASS6 and CPAP. Required for anchoring microtubules to the centrosomes and for the integrity of the microtubule network. Recruits PPARA to discrete subcellular compartments and thereby modulates PPARA activity. Required for ciliation. The polypeptide is Centrosome-associated protein 350 (Homo sapiens (Human)).